The chain runs to 291 residues: Elongation factor Ts (291 aa).

Positions 79 to 82 are involved in Mg(2+) ion dislocation from EF-Tu; it reads TDFV.

Belongs to the EF-Ts family.

The protein resides in the cytoplasm. Functionally, associates with the EF-Tu.GDP complex and induces the exchange of GDP to GTP. It remains bound to the aminoacyl-tRNA.EF-Tu.GTP complex up to the GTP hydrolysis stage on the ribosome. The sequence is that of Elongation factor Ts from Dinoroseobacter shibae (strain DSM 16493 / NCIMB 14021 / DFL 12).